An 853-amino-acid chain; its full sequence is Tape measure protein (853 aa).

Coiled coils occupy residues 360-387 and 548-568; these read REKA…AQQQ and KVTY…FAQQ. The tract at residues 370–393 is disordered; sequence ARKKAEQQTQQDKNAQQQSDTEAS. The segment covering 376 to 387 has biased composition (low complexity); it reads QQTQQDKNAQQQ.

The protein belongs to the Lambdavirus tape measure protein family. Interacts with the tail initiator complex presumably through its C-terminus domain. Interacts with the tail assembly protein G. Interacts with the tail assembly protein GT. In terms of processing, cleaved into mature protein H* by an unidentified protease.

The protein resides in the virion. Functionally, serves as a ruler that controls the length of tail by stopping the tail tube polymerization and is probably released from the tail shaft during infection to facilitate DNA translocation into the host cell. Assembles into a multimeric linear form possibly stabilized by the covering tail assembly proteins G and GT. Its C-terminus fixes the tail tip complex (J, I, L, K), thereby forming the tail assembly initiator complex. Tail tube proteins polymerize around tape measure protein, displacing the tail assembly protein G and GT. When the tail reaches the length specified by the tape measure protein, it stops and becomes capped by the tail terminator protein. Upon tail assembly, tape measure protein is cleaved into a form called H*, that plays a role later during virion entry in a new cell. Once assembled, the virion is released and can infect new cells by binding to the entry receptor LambB. After opening of a pore on the external membrane, the entry protein H* protein is probably released in the periplasmic space for successful DNA injection. The chain is Tape measure protein from Escherichia phage lambda (Bacteriophage lambda).